Here is a 156-residue protein sequence, read N- to C-terminus: Transcriptional repressor NrdR (156 aa).

A zinc finger spans residues 3–34 (CPYCGHLDNKVIDSRINKDATITRRRRSCLAC). The ATP-cone domain occupies 49–139 (PMLVKKDGRR…VYRQFKDVDE (91 aa)).

The protein belongs to the NrdR family. Zn(2+) is required as a cofactor.

Functionally, negatively regulates transcription of bacterial ribonucleotide reductase nrd genes and operons by binding to NrdR-boxes. This Desulfotalea psychrophila (strain LSv54 / DSM 12343) protein is Transcriptional repressor NrdR.